The following is a 154-amino-acid chain: MNFEGKLIGKELKVVIVVSRFNDFITGRLLEGAKDTLIRHDVNEDNIDVAFVPGAFEIPLVAKKLASSGNYDAVITLGCVIRGATSHFDYVCNEVAKGVSKVNDQTNVPVIFGILTTESIEQAVERAGTKAGNKGAEAAVSAIEMANLLKSIKA.

Residues Phe21, 55–57, and 79–81 contribute to the 5-amino-6-(D-ribitylamino)uracil site; these read AFE and CVI. 84–85 contributes to the (2S)-2-hydroxy-3-oxobutyl phosphate binding site; that stretch reads AT. His87 (proton donor) is an active-site residue. Phe112 lines the 5-amino-6-(D-ribitylamino)uracil pocket. (2S)-2-hydroxy-3-oxobutyl phosphate is bound at residue Arg126.

This sequence belongs to the DMRL synthase family. Forms an icosahedral capsid composed of 60 subunits, arranged as a dodecamer of pentamers.

The catalysed reaction is (2S)-2-hydroxy-3-oxobutyl phosphate + 5-amino-6-(D-ribitylamino)uracil = 6,7-dimethyl-8-(1-D-ribityl)lumazine + phosphate + 2 H2O + H(+). Its pathway is cofactor biosynthesis; riboflavin biosynthesis; riboflavin from 2-hydroxy-3-oxobutyl phosphate and 5-amino-6-(D-ribitylamino)uracil: step 1/2. Functionally, catalyzes the formation of 6,7-dimethyl-8-ribityllumazine by condensation of 5-amino-6-(D-ribitylamino)uracil with 3,4-dihydroxy-2-butanone 4-phosphate. This is the penultimate step in the biosynthesis of riboflavin. The sequence is that of 6,7-dimethyl-8-ribityllumazine synthase from Staphylococcus aureus (strain MRSA252).